Reading from the N-terminus, the 235-residue chain is MSIHIGAKEGQIAETILLPGDPLRAKFIAETFLENPVCYNEVRGMLGYTGTYKGKRISVQGTGMGVPSISIYVNELIRDYGVKNLIRVGTAGGMQEDIKVRDLVLAMSSHTDSAINKVRFNGLDFAPTASFKLLKAAYDTAVEKGYSPKVGSVFTADSFYNDNPEAWKQWAKFGTLAVEMETAALYTLAAKYGVNALTILTISDHLITAEETTSEERQTTFTKMMEVALDAAITL.

His-4 lines the a purine D-ribonucleoside pocket. Residues Gly-20, Arg-24, Arg-43, and 87 to 90 (RVGT) each bind phosphate. Residues 179–181 (EME) and 203–204 (SD) contribute to the a purine D-ribonucleoside site. The active-site Proton donor is Asp-204.

Belongs to the PNP/UDP phosphorylase family. In terms of assembly, homohexamer; trimer of homodimers.

The catalysed reaction is a purine D-ribonucleoside + phosphate = a purine nucleobase + alpha-D-ribose 1-phosphate. It catalyses the reaction a purine 2'-deoxy-D-ribonucleoside + phosphate = a purine nucleobase + 2-deoxy-alpha-D-ribose 1-phosphate. Functionally, catalyzes the reversible phosphorolytic breakdown of the N-glycosidic bond in the beta-(deoxy)ribonucleoside molecules, with the formation of the corresponding free purine bases and pentose-1-phosphate. In Clostridium perfringens (strain SM101 / Type A), this protein is Purine nucleoside phosphorylase DeoD-type.